The following is a 496-amino-acid chain: Genome polyprotein (496 aa).

The Extracellular segment spans residues 1–447 (SRCTHLENRD…HTVLGGAFNS (447 aa)). Disulfide bonds link Cys-3/Cys-30, Cys-60/Cys-116, Cys-60/Cys-121, Cys-74/Cys-105, Cys-92/Cys-116, and Cys-92/Cys-121. Residues 98 to 111 (DRGWGNHCGLFGKG) are fusion peptide. Asn-154 carries N-linked (GlcNAc...) asparagine; by host glycosylation. Disulfide bonds link Cys-186-Cys-290 and Cys-307-Cys-338. Residues 448-468 (IFGGVGFLPKLLMGVALAWLG) form a helical membrane-spanning segment. Topologically, residues 469 to 479 (LNTRNPTMSIS) are cytoplasmic. A helical membrane pass occupies residues 480 to 496 (FLLTGGLVLAMTLGVGA).

In terms of assembly, homodimer; in the endoplasmic reticulum and Golgi. In terms of processing, N-glycosylated.

The protein localises to the virion membrane. Its subcellular location is the host endoplasmic reticulum membrane. In terms of biological role, binds to host cell surface receptor and mediates fusion between viral and cellular membranes. Envelope protein is synthesized in the endoplasmic reticulum in the form of heterodimer with protein prM. They play a role in virion budding in the ER, and the newly formed immature particle is covered with 60 spikes composed of heterodimer between precursor prM and envelope protein E. The virion is transported to the Golgi apparatus where the low pH causes dissociation of PrM-E heterodimers and formation of E homodimers. prM-E cleavage is ineficient, and many virions are only partially matured. These uncleaved prM would play a role in immune evasion. The protein is Genome polyprotein of Louping ill virus (strain SB 526) (Li).